Reading from the N-terminus, the 458-residue chain is UDP-N-acetylmuramate--L-alanine ligase (458 aa).

119 to 125 (GTHGKTT) is an ATP binding site.

It belongs to the MurCDEF family.

Its subcellular location is the cytoplasm. The catalysed reaction is UDP-N-acetyl-alpha-D-muramate + L-alanine + ATP = UDP-N-acetyl-alpha-D-muramoyl-L-alanine + ADP + phosphate + H(+). Its pathway is cell wall biogenesis; peptidoglycan biosynthesis. Its function is as follows. Cell wall formation. The polypeptide is UDP-N-acetylmuramate--L-alanine ligase (Phocaeicola vulgatus (strain ATCC 8482 / DSM 1447 / JCM 5826 / CCUG 4940 / NBRC 14291 / NCTC 11154) (Bacteroides vulgatus)).